Reading from the N-terminus, the 797-residue chain is Adhesion G-protein coupled receptor G7 (797 aa).

A signal peptide spans Met-1–Gly-26. The Extracellular segment spans residues Leu-27–Ser-438. N-linked (GlcNAc...) asparagine glycans are attached at residues Asn-82, Asn-159, Asn-178, Asn-191, Asn-247, Asn-261, Asn-312, Asn-316, and Asn-387. Residues Phe-275–Tyr-428 enclose the GAIN-B domain. Cystine bridges form between Cys-383–Cys-410 and Cys-398–Cys-412. The segment at Cys-383–Tyr-428 is GPS. Asn-413 carries N-linked (GlcNAc...) asparagine glycosylation. The chain crosses the membrane as a helical span at residues Asn-439–Thr-459. Over Arg-460–Thr-468 the chain is Cytoplasmic. The chain crosses the membrane as a helical span at residues Trp-469–Ile-489. The Extracellular segment spans residues Glu-490 to Ala-528. Residues Ile-529 to Ala-549 form a helical membrane-spanning segment. The Cytoplasmic segment spans residues Gln-550–His-565. Residues Phe-566 to Val-586 traverse the membrane as a helical segment. Residues Gly-587–Pro-623 are Extracellular-facing. A helical membrane pass occupies residues Leu-624–Ile-644. The Cytoplasmic segment spans residues Thr-645–Lys-669. Residues Ile-670–Met-690 form a helical membrane-spanning segment. Residues Leu-691 to Arg-698 are Extracellular-facing. The helical transmembrane segment at Ile-699 to Leu-719 threads the bilayer. The Cytoplasmic segment spans residues Tyr-720–Ile-797.

It belongs to the G-protein coupled receptor 2 family. Adhesion G-protein coupled receptor (ADGR) subfamily.

Its subcellular location is the membrane. Functionally, orphan receptor. The polypeptide is Adhesion G-protein coupled receptor G7 (ADGRG7) (Homo sapiens (Human)).